The sequence spans 354 residues: MKNKNKRLLVMAGGTGGHVFPGLAVAKQLQSEGWEIRWLGTADRMEADLVPKHGIEIDFIKVKGLRGQGLKKLIAAPFQILGAISQAKKHIKAWQPDVVLGMGGYVSGPGGIAAWLSGIPVVLHEQNAVAGLTNQWLSKIAKRVFQAFPGAFPNAEVVGNPVREDVCQLPHPKERFAQRTGPIRLLVMGGSQGARILNTTLPEALPQLSHEIEIWHQAGKGSQETVEQAYRDNGIADAKVTEFIDNVAEAYAWADLLVCRSGALTVSEVSAAGVGSIFIPFMHKDRQQALNADHLVQCGAAQMIEQQDLTVQGLVDTLNGLERKQLLDMACNARDAAIIDADVRVANAIKSLAK.

Residues 15 to 17 (TGG), asparagine 127, arginine 163, serine 191, isoleucine 244, 263 to 268 (ALTVSE), and glutamine 288 each bind UDP-N-acetyl-alpha-D-glucosamine.

The protein belongs to the glycosyltransferase 28 family. MurG subfamily.

Its subcellular location is the cell inner membrane. It catalyses the reaction di-trans,octa-cis-undecaprenyl diphospho-N-acetyl-alpha-D-muramoyl-L-alanyl-D-glutamyl-meso-2,6-diaminopimeloyl-D-alanyl-D-alanine + UDP-N-acetyl-alpha-D-glucosamine = di-trans,octa-cis-undecaprenyl diphospho-[N-acetyl-alpha-D-glucosaminyl-(1-&gt;4)]-N-acetyl-alpha-D-muramoyl-L-alanyl-D-glutamyl-meso-2,6-diaminopimeloyl-D-alanyl-D-alanine + UDP + H(+). It functions in the pathway cell wall biogenesis; peptidoglycan biosynthesis. Functionally, cell wall formation. Catalyzes the transfer of a GlcNAc subunit on undecaprenyl-pyrophosphoryl-MurNAc-pentapeptide (lipid intermediate I) to form undecaprenyl-pyrophosphoryl-MurNAc-(pentapeptide)GlcNAc (lipid intermediate II). The sequence is that of UDP-N-acetylglucosamine--N-acetylmuramyl-(pentapeptide) pyrophosphoryl-undecaprenol N-acetylglucosamine transferase from Aliivibrio fischeri (strain MJ11) (Vibrio fischeri).